Consider the following 371-residue polypeptide: Beta-1,3-galactosyltransferase 4 (371 aa).

Topologically, residues 1–4 are cytoplasmic; that stretch reads MPLS. The helical; Signal-anchor for type II membrane protein transmembrane segment at 5–25 threads the bilayer; that stretch reads LFRRVLLAVLLLVIIWTLFGP. At 26-371 the chain is on the lumenal side; that stretch reads SGLGEELLSL…RCRFIAWFSS (346 aa). An N-linked (GlcNAc...) asparagine glycan is attached at asparagine 143.

The protein belongs to the glycosyltransferase 31 family. As to expression, expressed in heart, brain, spleen, kidney, lung and testis.

The protein resides in the golgi apparatus membrane. The enzyme catalyses a ganglioside GM2 (d18:1(4E)) + UDP-alpha-D-galactose = a ganglioside GM1 (d18:1(4E)) + UDP + H(+). It catalyses the reaction a ganglioside GM2 + UDP-alpha-D-galactose = a ganglioside GM1 + UDP + H(+). It carries out the reaction a ganglioside GD2 (d18:1(4E)) + UDP-alpha-D-galactose = a ganglioside GD1b (d18:1(4E)) + UDP + H(+). The catalysed reaction is a ganglioside GA2 (d18:1(4E)) + UDP-alpha-D-galactose = a ganglioside GA1 (d18:1(4E)) + UDP + H(+). The protein operates within protein modification; protein glycosylation. In terms of biological role, involved in GM1/GD1B/GA1 ganglioside biosynthesis. This Mus musculus (Mouse) protein is Beta-1,3-galactosyltransferase 4.